The primary structure comprises 93 residues: Pyrimidine/purine nucleoside phosphorylase (93 aa).

This sequence belongs to the nucleoside phosphorylase PpnP family.

It catalyses the reaction a purine D-ribonucleoside + phosphate = a purine nucleobase + alpha-D-ribose 1-phosphate. The enzyme catalyses adenosine + phosphate = alpha-D-ribose 1-phosphate + adenine. The catalysed reaction is cytidine + phosphate = cytosine + alpha-D-ribose 1-phosphate. It carries out the reaction guanosine + phosphate = alpha-D-ribose 1-phosphate + guanine. It catalyses the reaction inosine + phosphate = alpha-D-ribose 1-phosphate + hypoxanthine. The enzyme catalyses thymidine + phosphate = 2-deoxy-alpha-D-ribose 1-phosphate + thymine. The catalysed reaction is uridine + phosphate = alpha-D-ribose 1-phosphate + uracil. It carries out the reaction xanthosine + phosphate = alpha-D-ribose 1-phosphate + xanthine. Catalyzes the phosphorolysis of diverse nucleosides, yielding D-ribose 1-phosphate and the respective free bases. Can use uridine, adenosine, guanosine, cytidine, thymidine, inosine and xanthosine as substrates. Also catalyzes the reverse reactions. This chain is Pyrimidine/purine nucleoside phosphorylase, found in Aliivibrio salmonicida (strain LFI1238) (Vibrio salmonicida (strain LFI1238)).